A 1554-amino-acid polypeptide reads, in one-letter code: Mediator of RNA polymerase II transcription subunit 12 (1554 aa).

2 disordered regions span residues 1-73 and 128-173; these read MASL…TKRQ and QGSL…VNQN. The span at 13–26 shows a compositional bias: low complexity; the sequence is SSRPSMSCGNSSSS. Polar residues predominate over residues 32-42; it reads GHSQRPSQTDP.

It belongs to the Mediator complex subunit 12 family. In terms of assembly, component of the SRB8-11 complex, which itself associates with the Mediator complex.

The protein localises to the nucleus. Its function is as follows. Component of the SRB8-11 complex. The SRB8-11 complex is a regulatory module of the Mediator complex which is itself involved in regulation of basal and activated RNA polymerase II-dependent transcription. The SRB8-11 complex may be involved in the transcriptional repression of a subset of genes regulated by Mediator. It may inhibit the association of the Mediator complex with RNA polymerase II to form the holoenzyme complex. This chain is Mediator of RNA polymerase II transcription subunit 12 (SRB8), found in Coccidioides immitis (strain RS) (Valley fever fungus).